We begin with the raw amino-acid sequence, 275 residues long: NH(3)-dependent NAD(+) synthetase (275 aa).

46–53 (GISGGQDS) is an ATP binding site. Aspartate 52 serves as a coordination point for Mg(2+). A deamido-NAD(+)-binding site is contributed by arginine 140. Residue threonine 160 participates in ATP binding. A Mg(2+)-binding site is contributed by glutamate 165. Positions 173 and 180 each coordinate deamido-NAD(+). The ATP site is built by lysine 189 and threonine 211. 260–261 (HK) contacts deamido-NAD(+).

The protein belongs to the NAD synthetase family. In terms of assembly, homodimer.

It carries out the reaction deamido-NAD(+) + NH4(+) + ATP = AMP + diphosphate + NAD(+) + H(+). It functions in the pathway cofactor biosynthesis; NAD(+) biosynthesis; NAD(+) from deamido-NAD(+) (ammonia route): step 1/1. Its function is as follows. Catalyzes the ATP-dependent amidation of deamido-NAD to form NAD. Uses ammonia as a nitrogen source. In Escherichia coli O7:K1 (strain IAI39 / ExPEC), this protein is NH(3)-dependent NAD(+) synthetase.